Consider the following 101-residue polypeptide: Nucleoid-associated protein Acid345_1974 (101 aa).

Belongs to the YbaB/EbfC family. In terms of assembly, homodimer.

Its subcellular location is the cytoplasm. The protein localises to the nucleoid. In terms of biological role, binds to DNA and alters its conformation. May be involved in regulation of gene expression, nucleoid organization and DNA protection. This Koribacter versatilis (strain Ellin345) protein is Nucleoid-associated protein Acid345_1974.